A 362-amino-acid polypeptide reads, in one-letter code: Neisseria adhesin A (362 aa).

Positions 1 to 23 are cleaved as a signal peptide; it reads MKHFPSKVLTTAILATFCSGALA. A head domain region spans residues 24-169; it reads ATSDDDVKKA…NIVKIDEKLE (146 aa). Coiled-coil stretches lie at residues 90-146 and 183-288; these read VTNL…LNKL and NDIA…KETR. Positions 170–307 are coiled stalk domain; that stretch reads AVADTVDKHA…SGLFQPYNVG (138 aa). 4 beta stranded membrane passes run 307–317, 321–332, 339–345, and 351–362; these read GRFNVTAAVGG, ESAVAIGTGFRF, KAGVAVG, and SAAYHVGVNYEW. The tract at residues 308–362 is translocator domain; sequence RFNVTAAVGGYKSESAVAIGTGFRFTENFAAKAGVAVGTSSGSSAAYHVGVNYEW.

It belongs to the autotransporter-2 (AT-2) (TC 1.B.40) family. Forms high molecular weight oligomers in whole cell extracts that are not disrupted by boiling in SDS buffer. Homotrimer. A fragment containing the N-terminal half of the mature protein (residues 24-210, head domain plus part of the stalk) binds human integrin beta-1 (ITGB1). It was not seen to bind immobilized purified CEACAMs 1, 3, 5, 6 or 8 nor commercially prepared type I collagen, fibronectin or matrigel.

The protein localises to the cell surface. It localises to the cell outer membrane. In terms of biological role, adheres to and induces bacterial uptake by human epithelial cells. Upon expression in engineered Y.enterocolitica confers an 11- to 15-fold increase in bacterial adherence and uptake by human epithelial cell lines; part of the uptake is mediated by integrin beta-1 (ITGB1) suggesting it may be a human receptor for NadA. A bacterial cell surface protein; antisera against this protein induce complement-mediated killing of this and other strains. In Neisseria meningitidis serogroup B (strain ATCC BAA-335 / MC58), this protein is Neisseria adhesin A.